Consider the following 505-residue polypeptide: ATP synthase subunit alpha (505 aa).

An ATP-binding site is contributed by 171 to 178; the sequence is GDRQTGKT.

This sequence belongs to the ATPase alpha/beta chains family. As to quaternary structure, F-type ATPases have 2 components, CF(1) - the catalytic core - and CF(0) - the membrane proton channel. CF(1) has five subunits: alpha(3), beta(3), gamma(1), delta(1), epsilon(1). CF(0) has three main subunits: a(1), b(2) and c(9-12). The alpha and beta chains form an alternating ring which encloses part of the gamma chain. CF(1) is attached to CF(0) by a central stalk formed by the gamma and epsilon chains, while a peripheral stalk is formed by the delta and b chains.

It localises to the cell inner membrane. It catalyses the reaction ATP + H2O + 4 H(+)(in) = ADP + phosphate + 5 H(+)(out). Functionally, produces ATP from ADP in the presence of a proton gradient across the membrane. The alpha chain is a regulatory subunit. The chain is ATP synthase subunit alpha from Campylobacter hominis (strain ATCC BAA-381 / DSM 21671 / CCUG 45161 / LMG 19568 / NCTC 13146 / CH001A).